We begin with the raw amino-acid sequence, 455 residues long: Membrane protein Pbs54 (455 aa).

Residues 12–32 (IISIIILILRISLFSCAEHLF) form a helical membrane-spanning segment. N-linked (GlcNAc...) asparagine glycans are attached at residues Asn41, Asn102, and Asn125. The next 6 membrane-spanning stretches (helical) occupy residues 181-201 (IFLI…LFNG), 220-240 (FIFF…LSCI), 244-264 (ILTF…FYLF), 285-305 (ILIG…IIFI), 312-332 (FLVK…IFFL), and 346-366 (FVFS…FWNI). N-linked (GlcNAc...) asparagine glycosylation occurs at Asn373. Residues 398-418 (NMFALFMIFAMSILSIIFPRI) form a helical membrane-spanning segment.

It is found in the cell projection. The protein resides in the cilium. The protein localises to the flagellum. Its subcellular location is the cell membrane. Functionally, plays a role in gamete fertilization. Required for the successful transmission of parasites to mosquito. The sequence is that of Membrane protein Pbs54 from Plasmodium berghei (strain Anka).